The chain runs to 527 residues: Bifunctional purine biosynthesis protein PurH (527 aa).

Residues 8-156 enclose the MGS-like domain; the sequence is AGAKRPIRRA…KNHPSVAVVV (149 aa).

This sequence belongs to the PurH family.

The enzyme catalyses (6R)-10-formyltetrahydrofolate + 5-amino-1-(5-phospho-beta-D-ribosyl)imidazole-4-carboxamide = 5-formamido-1-(5-phospho-D-ribosyl)imidazole-4-carboxamide + (6S)-5,6,7,8-tetrahydrofolate. The catalysed reaction is IMP + H2O = 5-formamido-1-(5-phospho-D-ribosyl)imidazole-4-carboxamide. It participates in purine metabolism; IMP biosynthesis via de novo pathway; 5-formamido-1-(5-phospho-D-ribosyl)imidazole-4-carboxamide from 5-amino-1-(5-phospho-D-ribosyl)imidazole-4-carboxamide (10-formyl THF route): step 1/1. Its pathway is purine metabolism; IMP biosynthesis via de novo pathway; IMP from 5-formamido-1-(5-phospho-D-ribosyl)imidazole-4-carboxamide: step 1/1. This Mycobacterium sp. (strain KMS) protein is Bifunctional purine biosynthesis protein PurH.